A 291-amino-acid polypeptide reads, in one-letter code: Flavin-dependent thymidylate synthase (291 aa).

A ThyX domain is found at 31-241 (GFVRVVDYMG…PMVHAAFVEY (211 aa)). FAD contacts are provided by residues Ser-77, 100-102 (RHR), and Glu-108. Residues 97-100 (QWVR), 108-112 (EYSAR), and Arg-180 each bind dUMP. Positions 100 to 110 (RHRTASINEYS) match the ThyX motif motif. An FAD-binding site is contributed by 196 to 198 (NLH). Arg-207 is a binding site for dUMP. Arg-207 (involved in ionization of N3 of dUMP, leading to its activation) is an active-site residue.

This sequence belongs to the thymidylate synthase ThyX family. In terms of assembly, homotetramer. FAD serves as cofactor.

It catalyses the reaction dUMP + (6R)-5,10-methylene-5,6,7,8-tetrahydrofolate + NADPH + H(+) = dTMP + (6S)-5,6,7,8-tetrahydrofolate + NADP(+). It functions in the pathway pyrimidine metabolism; dTTP biosynthesis. In terms of biological role, catalyzes the reductive methylation of 2'-deoxyuridine-5'-monophosphate (dUMP) to 2'-deoxythymidine-5'-monophosphate (dTMP) while utilizing 5,10-methylenetetrahydrofolate (mTHF) as the methyl donor, and NADPH and FADH(2) as the reductant. The sequence is that of Flavin-dependent thymidylate synthase from Anaplasma marginale (strain St. Maries).